The chain runs to 289 residues: Pseudouridine-5'-phosphate glycosidase (289 aa).

Residue Glu-10 is the Proton donor of the active site. Substrate contacts are provided by Lys-71 and Val-91. Asp-121 is a Mn(2+) binding site. 123-125 (SQD) is a substrate binding site. Lys-142 acts as the Nucleophile in catalysis.

This sequence belongs to the pseudouridine-5'-phosphate glycosidase family. In terms of assembly, homotrimer. The cofactor is Mn(2+).

It catalyses the reaction D-ribose 5-phosphate + uracil = psi-UMP + H2O. Catalyzes the reversible cleavage of pseudouridine 5'-phosphate (PsiMP) to ribose 5-phosphate and uracil. Functions biologically in the cleavage direction, as part of a pseudouridine degradation pathway. This is Pseudouridine-5'-phosphate glycosidase from Kosmotoga olearia (strain ATCC BAA-1733 / DSM 21960 / TBF 19.5.1).